A 130-amino-acid polypeptide reads, in one-letter code: Tripartite terminase subunit 2 (130 aa).

This sequence belongs to the herpesviridae TRM2 protein family. Associates with TRM1 and TRM3 to form the tripartite terminase complex.

It is found in the host nucleus. Component of the molecular motor that translocates viral genomic DNA in empty capsid during DNA packaging. Forms a tripartite terminase complex together with TRM1 and TRM3 in the host cytoplasm. Once the complex reaches the host nucleus, it interacts with the capsid portal vertex. This portal forms a ring in which genomic DNA is translocated into the capsid. This Homo sapiens (Human) protein is Tripartite terminase subunit 2.